Consider the following 356-residue polypeptide: SERTA domain-containing protein 4 (356 aa).

The tract at residues 33–53 (SYGGPSPPGPAQAPLQGDRGA) is disordered. The 47-residue stretch at 101-147 (IFEERAHILYMSLEKLKFIDDPEVYLRRSVLINNLMKRIHGEIIMQN) folds into the SERTA domain. A compositionally biased stretch (low complexity) spans 215 to 232 (TAASSPSASSSSSSSSSS). Disordered regions lie at residues 215 to 238 (TAAS…LPLP), 280 to 302 (KLND…HEPV), and 332 to 356 (WKKS…GSKI). A compositionally biased stretch (basic and acidic residues) spans 280-292 (KLNDEKANDDTNR).

The protein is SERTA domain-containing protein 4 (SERTAD4) of Homo sapiens (Human).